The primary structure comprises 377 residues: Phosphoserine aminotransferase (377 aa).

R43 is an L-glutamate binding site. Positions 105, 164, 189, and 212 each coordinate pyridoxal 5'-phosphate. K213 is subject to N6-(pyridoxal phosphate)lysine. N254–T255 provides a ligand contact to pyridoxal 5'-phosphate.

This sequence belongs to the class-V pyridoxal-phosphate-dependent aminotransferase family. SerC subfamily. In terms of assembly, homodimer. Requires pyridoxal 5'-phosphate as cofactor.

The protein localises to the cytoplasm. It catalyses the reaction O-phospho-L-serine + 2-oxoglutarate = 3-phosphooxypyruvate + L-glutamate. The enzyme catalyses 4-(phosphooxy)-L-threonine + 2-oxoglutarate = (R)-3-hydroxy-2-oxo-4-phosphooxybutanoate + L-glutamate. The protein operates within amino-acid biosynthesis; L-serine biosynthesis; L-serine from 3-phospho-D-glycerate: step 2/3. It participates in cofactor biosynthesis; pyridoxine 5'-phosphate biosynthesis; pyridoxine 5'-phosphate from D-erythrose 4-phosphate: step 3/5. Catalyzes the reversible conversion of 3-phosphohydroxypyruvate to phosphoserine and of 3-hydroxy-2-oxo-4-phosphonooxybutanoate to phosphohydroxythreonine. This chain is Phosphoserine aminotransferase, found in Bordetella pertussis (strain Tohama I / ATCC BAA-589 / NCTC 13251).